Consider the following 425-residue polypeptide: Histidine--tRNA ligase (425 aa).

The protein belongs to the class-II aminoacyl-tRNA synthetase family. In terms of assembly, homodimer.

The protein resides in the cytoplasm. It catalyses the reaction tRNA(His) + L-histidine + ATP = L-histidyl-tRNA(His) + AMP + diphosphate + H(+). In Shewanella sp. (strain MR-7), this protein is Histidine--tRNA ligase.